Here is a 201-residue protein sequence, read N- to C-terminus: Imidazole glycerol phosphate synthase subunit HisH (201 aa).

The region spanning 1–201 (MVFIADYGAG…LQVLKNFAEF (201 aa)) is the Glutamine amidotransferase type-1 domain. Residue C79 is the Nucleophile of the active site. Active-site residues include H183 and E185.

In terms of assembly, heterodimer of HisH and HisF.

It is found in the cytoplasm. It carries out the reaction 5-[(5-phospho-1-deoxy-D-ribulos-1-ylimino)methylamino]-1-(5-phospho-beta-D-ribosyl)imidazole-4-carboxamide + L-glutamine = D-erythro-1-(imidazol-4-yl)glycerol 3-phosphate + 5-amino-1-(5-phospho-beta-D-ribosyl)imidazole-4-carboxamide + L-glutamate + H(+). The catalysed reaction is L-glutamine + H2O = L-glutamate + NH4(+). The protein operates within amino-acid biosynthesis; L-histidine biosynthesis; L-histidine from 5-phospho-alpha-D-ribose 1-diphosphate: step 5/9. Its function is as follows. IGPS catalyzes the conversion of PRFAR and glutamine to IGP, AICAR and glutamate. The HisH subunit catalyzes the hydrolysis of glutamine to glutamate and ammonia as part of the synthesis of IGP and AICAR. The resulting ammonia molecule is channeled to the active site of HisF. This Chlorobaculum tepidum (strain ATCC 49652 / DSM 12025 / NBRC 103806 / TLS) (Chlorobium tepidum) protein is Imidazole glycerol phosphate synthase subunit HisH.